A 486-amino-acid polypeptide reads, in one-letter code: UDP-N-acetylmuramoyl-L-alanyl-D-glutamate--2,6-diaminopimelate ligase (486 aa).

S30 is a binding site for UDP-N-acetyl-alpha-D-muramoyl-L-alanyl-D-glutamate. 111–117 is an ATP binding site; that stretch reads GTNGKTT. Residues 153–154, S180, Q186, and R188 contribute to the UDP-N-acetyl-alpha-D-muramoyl-L-alanyl-D-glutamate site; that span reads TT. K220 is modified (N6-carboxylysine). Meso-2,6-diaminopimelate contacts are provided by residues R378, 402–405, G455, and E459; that span reads DNPR. The Meso-diaminopimelate recognition motif motif lies at 402–405; the sequence is DNPR.

Belongs to the MurCDEF family. MurE subfamily. Mg(2+) serves as cofactor. Carboxylation is probably crucial for Mg(2+) binding and, consequently, for the gamma-phosphate positioning of ATP.

It localises to the cytoplasm. The enzyme catalyses UDP-N-acetyl-alpha-D-muramoyl-L-alanyl-D-glutamate + meso-2,6-diaminopimelate + ATP = UDP-N-acetyl-alpha-D-muramoyl-L-alanyl-gamma-D-glutamyl-meso-2,6-diaminopimelate + ADP + phosphate + H(+). Its pathway is cell wall biogenesis; peptidoglycan biosynthesis. Catalyzes the addition of meso-diaminopimelic acid to the nucleotide precursor UDP-N-acetylmuramoyl-L-alanyl-D-glutamate (UMAG) in the biosynthesis of bacterial cell-wall peptidoglycan. The chain is UDP-N-acetylmuramoyl-L-alanyl-D-glutamate--2,6-diaminopimelate ligase from Parabacteroides distasonis (strain ATCC 8503 / DSM 20701 / CIP 104284 / JCM 5825 / NCTC 11152).